Consider the following 322-residue polypeptide: Ferredoxin--NADP reductase (322 aa).

7 residues coordinate FAD: aspartate 33, glutamine 41, tyrosine 46, alanine 86, phenylalanine 120, aspartate 278, and serine 319.

Belongs to the ferredoxin--NADP reductase type 2 family. In terms of assembly, homodimer. Requires FAD as cofactor.

The catalysed reaction is 2 reduced [2Fe-2S]-[ferredoxin] + NADP(+) + H(+) = 2 oxidized [2Fe-2S]-[ferredoxin] + NADPH. In Salinispora tropica (strain ATCC BAA-916 / DSM 44818 / JCM 13857 / NBRC 105044 / CNB-440), this protein is Ferredoxin--NADP reductase.